Consider the following 177-residue polypeptide: Inorganic pyrophosphatase (177 aa).

3 residues coordinate substrate: K34, R48, and Y60. Mg(2+) contacts are provided by D70, D75, and D107. Y144 serves as a coordination point for substrate.

This sequence belongs to the PPase family. Homohexamer. Requires Mg(2+) as cofactor.

It localises to the cytoplasm. The catalysed reaction is diphosphate + H2O = 2 phosphate + H(+). In terms of biological role, catalyzes the hydrolysis of inorganic pyrophosphate (PPi) forming two phosphate ions. The protein is Inorganic pyrophosphatase of Picrophilus torridus (strain ATCC 700027 / DSM 9790 / JCM 10055 / NBRC 100828 / KAW 2/3).